We begin with the raw amino-acid sequence, 188 residues long: MPSISTVSKGSIIRFKGEPHSIESLIHRTPGNLRAFYQANMKNLKTGRNVEYRFSSSETVDVIVTERKQYQYLYRDGSDFVMMDNNTFEQINVPEVALGEGANFMKDNINVTIVFSDDGSILQVELPTFVEVEVTDTNPASKDDRATSGTKPAIVETGAEVNVPMFIQIGSVIRVDTRTGEYIERVKK.

Belongs to the elongation factor P family.

The protein localises to the cytoplasm. It functions in the pathway protein biosynthesis; polypeptide chain elongation. In terms of biological role, involved in peptide bond synthesis. Stimulates efficient translation and peptide-bond synthesis on native or reconstituted 70S ribosomes in vitro. Probably functions indirectly by altering the affinity of the ribosome for aminoacyl-tRNA, thus increasing their reactivity as acceptors for peptidyl transferase. This chain is Elongation factor P, found in Chlorobium chlorochromatii (strain CaD3).